We begin with the raw amino-acid sequence, 128 residues long: SH2 domain-containing protein 1A (128 aa).

The SH2 domain maps to 6–102 (VYHGKISRET…GIVIPLQYPV (97 aa)). Positions 67 to 92 (DTAPGVHKRFFRKIKNLISAFQKPDQ) are interaction with FYN SH3 domain. At lysine 89 the chain carries N6-acetyllysine. A disordered region spans residues 103–128 (EKKSSARSTQGATGRREDPDVFLKTP). Over residues 116 to 128 (GRREDPDVFLKTP) the composition is skewed to basic and acidic residues.

Interacts with CD84, CD244, LY9, SLAMF1 and FYN. Interacts with NTRK1, NTRK2 and NTRK3.

Its subcellular location is the cytoplasm. In terms of biological role, cytoplasmic adapter regulating receptors of the signaling lymphocytic activation molecule (SLAM) family such as SLAMF1, CD244, LY9, CD84, SLAMF6 and SLAMF7. In SLAM signaling seems to cooperate with SH2D1B/EAT-2. Initially it has been proposed that association with SLAMF1 prevents SLAMF1 binding to inhibitory effectors including INPP5D/SHIP1 and PTPN11/SHP-2. However, by simultaneous interactions, recruits FYN which subsequently phosphorylates and activates SLAMF1. Positively regulates CD244/2B4- and CD84-mediated natural killer (NK) cell functions. Can also promote CD48-, SLAMF6 -, LY9-, and SLAMF7-mediated NK cell activation. In the context of NK cell-mediated cytotoxicity enhances conjugate formation with target cells. May also regulate the activity of the neurotrophin receptors NTRK1, NTRK2 and NTRK3. The protein is SH2 domain-containing protein 1A (SH2D1A) of Sus scrofa (Pig).